A 229-amino-acid polypeptide reads, in one-letter code: Flagellar L-ring protein (229 aa).

An N-terminal signal peptide occupies residues 1 to 23 (MLSRLGARALVCLAGVAMLAASG). Residue cysteine 24 is the site of N-palmitoyl cysteine attachment. Residue cysteine 24 is the site of S-diacylglycerol cysteine attachment.

The protein belongs to the FlgH family. The basal body constitutes a major portion of the flagellar organelle and consists of four rings (L,P,S, and M) mounted on a central rod.

It localises to the cell outer membrane. The protein localises to the bacterial flagellum basal body. In terms of biological role, assembles around the rod to form the L-ring and probably protects the motor/basal body from shearing forces during rotation. The polypeptide is Flagellar L-ring protein (Cupriavidus taiwanensis (strain DSM 17343 / BCRC 17206 / CCUG 44338 / CIP 107171 / LMG 19424 / R1) (Ralstonia taiwanensis (strain LMG 19424))).